A 274-amino-acid polypeptide reads, in one-letter code: Large ribosomal subunit protein uL2c (274 aa).

2 disordered regions span residues 1–22 (MAIHLYKTSTPSTRNGAVDSQV) and 225–254 (PVDHPHGGGEGRAPIGRKKPVTPWGYPALG).

Belongs to the universal ribosomal protein uL2 family. In terms of assembly, part of the 50S ribosomal subunit.

It localises to the plastid. The protein localises to the chloroplast. The chain is Large ribosomal subunit protein uL2c (rpl2) from Sinapis alba (White mustard).